Consider the following 543-residue polypeptide: Hydroxylamine reductase (543 aa).

The [4Fe-4S] cluster site is built by cysteine 5, cysteine 8, cysteine 17, and cysteine 23. Hybrid [4Fe-2O-2S] cluster-binding residues include histidine 236, glutamate 260, cysteine 304, cysteine 398, cysteine 426, cysteine 451, glutamate 486, and lysine 488. Residue cysteine 398 is modified to Cysteine persulfide.

It belongs to the HCP family. [4Fe-4S] cluster serves as cofactor. Hybrid [4Fe-2O-2S] cluster is required as a cofactor.

The protein localises to the cytoplasm. It carries out the reaction A + NH4(+) + H2O = hydroxylamine + AH2 + H(+). In terms of biological role, catalyzes the reduction of hydroxylamine to form NH(3) and H(2)O. The sequence is that of Hydroxylamine reductase from Bacteroides fragilis (strain ATCC 25285 / DSM 2151 / CCUG 4856 / JCM 11019 / LMG 10263 / NCTC 9343 / Onslow / VPI 2553 / EN-2).